We begin with the raw amino-acid sequence, 211 residues long: PITH domain-containing protein 1 (211 aa).

The 173-residue stretch at 20–192 folds into the PITH domain; the sequence is EPPEQRGLAY…EVTICNYEAS (173 aa). Phosphotyrosine is present on Y189.

The protein belongs to the PITHD1 family. As to expression, down-regulated in primary acute myeloid leukemia (AML) patients.

Its subcellular location is the cytoplasm. Promotes megakaryocyte differentiation by up-regulating RUNX1 expression. Regulates RUNX1 expression by activating the proximal promoter of the RUNX1 gene and by enhancing the translation activity of an internal ribosome entry site (IRES) element in the RUNX1 gene. In Homo sapiens (Human), this protein is PITH domain-containing protein 1 (PITHD1).